A 650-amino-acid polypeptide reads, in one-letter code: Chaperone protein DnaK (650 aa).

Threonine 200 bears the Phosphothreonine; by autocatalysis mark.

The protein belongs to the heat shock protein 70 family.

Acts as a chaperone. In Burkholderia orbicola (strain MC0-3), this protein is Chaperone protein DnaK.